The chain runs to 332 residues: Ribosomal RNA small subunit methyltransferase H (332 aa).

Residues G36–Y38, D54, F81, D102, and Q109 contribute to the S-adenosyl-L-methionine site.

This sequence belongs to the methyltransferase superfamily. RsmH family.

The protein localises to the cytoplasm. The catalysed reaction is cytidine(1402) in 16S rRNA + S-adenosyl-L-methionine = N(4)-methylcytidine(1402) in 16S rRNA + S-adenosyl-L-homocysteine + H(+). In terms of biological role, specifically methylates the N4 position of cytidine in position 1402 (C1402) of 16S rRNA. This chain is Ribosomal RNA small subunit methyltransferase H, found in Nitrobacter winogradskyi (strain ATCC 25391 / DSM 10237 / CIP 104748 / NCIMB 11846 / Nb-255).